The primary structure comprises 336 residues: CMP-sialic acid transporter (336 aa).

The Cytoplasmic portion of the chain corresponds to 1-9 (MAQARENVS). Residues 10 to 30 (LFFKLYCLAVMTLVAAAYTVA) form a helical membrane-spanning segment. The Lumenal portion of the chain corresponds to 31–45 (LRYTRTTAKELYFST). A helical membrane pass occupies residues 46 to 64 (TAVCVTEVIKLLISVGLLA). Position 55 (K55) interacts with CMP-N-acetyl-beta-neuraminate. Residues 65–87 (KETGSLGRFKASLSENVLGSPKE) lie on the Cytoplasmic side of the membrane. A helical transmembrane segment spans residues 88–108 (LMKLSVPSLVYAVQNNMAFLA). Position 101-102 (101-102 (QN)) interacts with CMP-N-acetyl-beta-neuraminate. The Lumenal segment spans residues 109–114 (LSNLDA). A helical transmembrane segment spans residues 115–135 (AVYQVTYQLKIPCTALCTVLM). 117–124 (YQVTYQLK) provides a ligand contact to CMP-N-acetyl-beta-neuraminate. Topologically, residues 136-141 (LNRTLS) are cytoplasmic. Residues 142 to 160 (KLQWVSVFMLCGGVILVQW) form a helical membrane-spanning segment. The Lumenal portion of the chain corresponds to 161 to 175 (KPAQATKVVVEQSPL). A helical transmembrane segment spans residues 176-196 (LGFGAIAIAVLCSGFAGVYFE). S188 provides a ligand contact to CMP-N-acetyl-beta-neuraminate. The Cytoplasmic portion of the chain corresponds to 197-209 (KVLKSSDTSLWVR). 210 to 214 (NIQMY) lines the CMP-N-acetyl-beta-neuraminate pocket. A helical transmembrane segment spans residues 210–228 (NIQMYLSGIVVTLVGTYLS). At 229–243 (DGAEIKEKGFFYGYT) the chain is on the lumenal side. Residues 244–262 (YYVWFVIFLASVGGLYTSV) form a helical membrane-spanning segment. Residues 263–269 (VVKYTDN) lie on the Cytoplasmic side of the membrane. The chain crosses the membrane as a helical span at residues 270 to 288 (IMKGFSAAAAIVLSTIASV). A CMP-N-acetyl-beta-neuraminate-binding site is contributed by K272. Topologically, residues 289–296 (MLFGLQIT) are lumenal. A helical membrane pass occupies residues 297–315 (LSFAMGALLVCISIYLYGL). Topologically, residues 316 to 336 (PRQDTTCIQQEATSKERVIGV) are cytoplasmic. Residues 316–336 (PRQDTTCIQQEATSKERVIGV) form a disordered region.

This sequence belongs to the nucleotide-sugar transporter family. SLC35A subfamily. As to quaternary structure, monomer.

The protein resides in the golgi apparatus membrane. It catalyses the reaction CMP-N-acetyl-beta-neuraminate(in) + CMP(out) = CMP-N-acetyl-beta-neuraminate(out) + CMP(in). The catalysed reaction is CMP-N-acetyl-beta-neuraminate(in) + AMP(out) = CMP-N-acetyl-beta-neuraminate(out) + AMP(in). It carries out the reaction CDP-L-ribitol(in) + CDP(out) = CDP-L-ribitol(out) + CDP(in). The enzyme catalyses UMP(out) + CMP-N-acetyl-beta-neuraminate(in) = UMP(in) + CMP-N-acetyl-beta-neuraminate(out). Its function is as follows. Transports CMP-sialic acid from the cytosol into the Golgi apparatus, functioning as an antiporter that exchanges CMP-sialic acid for CMP. Binds both CMP-sialic acid and free CMP, but has higher affinity for free CMP. Also able to exchange CMP-sialic acid for AMP and UMP. Also mediates the transport of CDP-ribitol. In Cricetulus griseus (Chinese hamster), this protein is CMP-sialic acid transporter (SLC35A1).